We begin with the raw amino-acid sequence, 175 residues long: Outer membrane protein assembly factor BamE (175 aa).

A signal peptide spans 1–21 (MQNTKLLLTSFTFVGLLALAG). Cysteine 22 is lipidated: N-palmitoyl cysteine. Residue cysteine 22 is the site of S-diacylglycerol cysteine attachment. Disordered stretches follow at residues 117–147 (ALLG…KPGS) and 156–175 (IDNV…TSPQ).

This sequence belongs to the BamE family. As to quaternary structure, part of the Bam complex.

The protein localises to the cell outer membrane. Its function is as follows. Part of the outer membrane protein assembly complex, which is involved in assembly and insertion of beta-barrel proteins into the outer membrane. May have a structural role in maintaining the cell envelope integrity. This chain is Outer membrane protein assembly factor BamE, found in Pseudomonas fluorescens.